Here is a 576-residue protein sequence, read N- to C-terminus: Cilia- and flagella-associated protein 100 (576 aa).

Positions 1–29 (MPIYDEASVPGTAAGRSTTDVGATAGANP) are disordered. Coiled coils occupy residues 125-226 (IFLL…CRRY), 254-311 (VAEW…IMKE), and 342-408 (YKQL…LKDR). Disordered stretches follow at residues 417–439 (TLSM…PGGP), 495–519 (AEKA…HREH), and 538–563 (TGKP…RNDE).

The protein belongs to the CFAP100 family. As to quaternary structure, interacts with FAP73; form the modifier of inner arm (MIA) complex.

Its subcellular location is the cytoplasm. The protein localises to the cytoskeleton. It localises to the flagellum axoneme. As part of MIA, a complex associated with the outer doublet microtubules of the axoneme, may play a role in ciliary/flagellar motility by regulating the assembly and the activity of axonemal inner dynein arm. The chain is Cilia- and flagella-associated protein 100 from Chlamydomonas reinhardtii (Chlamydomonas smithii).